A 3232-amino-acid polypeptide reads, in one-letter code: D-lysergyl-peptide-synthetase subunit 1 (3232 aa).

Residues 90–474 (GCLTYDEMSI…LGRKDDQVKI (385 aa)) are adenylation (A) domain 1. Residues 617–686 (REKLLQGCFA…TLREIVIVST (70 aa)) form the Carrier 1 domain. The residue at position 649 (Ser-649) is an O-(pantetheine 4'-phosphoryl)serine. The segment at 731–1122 (EDIYPCTHLQ…EHILTQIHSN (392 aa)) is condensation (C) domain 1. The tract at residues 1165–1572 (QAKCQAQPDA…RRKDAQVKIR (408 aa)) is adenylation (A) domain 2. The 69-residue stretch at 1717 to 1785 (TEHEISAIWA…TIRKLALARG (69 aa)) folds into the Carrier 2 domain. O-(pantetheine 4'-phosphoryl)serine is present on Ser-1749. A condensation (C) domain 2 region spans residues 1835 to 2252 (ERIYPCSPIQ…ALPVLDEDQM (418 aa)). Positions 2276-2675 (QQCLRCPDSP…GRNDDQVKVR (400 aa)) are adenylation (A) domain 3. The region spanning 2810-2878 (MEAELQRLVG…RVSDLARIVE (69 aa)) is the Carrier 3 domain. Position 2842 is an O-(pantetheine 4'-phosphoryl)serine (Ser-2842). Positions 2943–3218 (LYFSKPVASE…LLHWLHQQHI (276 aa)) are cyclization (Cyc) domain.

The protein belongs to the NRP synthetase family.

The protein operates within alkaloid biosynthesis; ergot alkaloid biosynthesis. Its function is as follows. D-lysergyl-peptide-synthetase subunit 1; part of the gene cluster that mediates the biosynthesis of fungal ergot alkaloid. DmaW catalyzes the first step of ergot alkaloid biosynthesis by condensing dimethylallyl diphosphate (DMAP) and tryptophan to form 4-dimethylallyl-L-tryptophan. The second step is catalyzed by the methyltransferase easF that methylates 4-dimethylallyl-L-tryptophan in the presence of S-adenosyl-L-methionine, resulting in the formation of 4-dimethylallyl-L-abrine. The catalase easC and the FAD-dependent oxidoreductase easE then transform 4-dimethylallyl-L-abrine to chanoclavine-I which is further oxidized by easD in the presence of NAD(+), resulting in the formation of chanoclavine-I aldehyde. Agroclavine dehydrogenase easG then mediates the conversion of chanoclavine-I aldehyde to agroclavine via a non-enzymatic adduct reaction: the substrate is an iminium intermediate that is formed spontaneously from chanoclavine-I aldehyde in the presence of glutathione. The presence of easA is not required to complete this reaction. Further conversion of agroclavine to paspalic acid is a two-step process involving oxidation of agroclavine to elymoclavine and of elymoclavine to paspalic acid, the second step being performed by the elymoclavine oxidase cloA. Paspalic acid is then further converted to D-lysergic acid. Ergopeptines are assembled from D-lysergic acid and three different amino acids by the D-lysergyl-peptide-synthetases composed each of a monomudular and a trimodular nonribosomal peptide synthetase subunit. LpsB and lpsC encode the monomodular subunits responsible for D-lysergic acid activation and incorporation into the ergopeptine backbone. LpsA1 and A2 subunits encode the trimodular nonribosomal peptide synthetase assembling the tripeptide portion of ergopeptines. LpsA1 is responsible for formation of the major ergopeptine, ergotamine, and lpsA2 for alpha-ergocryptine, the minor ergopeptine of the total alkaloid mixture elaborated by C.purpurea. D-lysergyl-tripeptides are assembled by the nonribosomal peptide synthetases and released as N-(D-lysergyl-aminoacyl)-lactams. Cyclolization of the D-lysergyl-tripeptides is performed by the Fe(2+)/2-ketoglutarate-dependent dioxygenase easH which introduces a hydroxyl group into N-(D-lysergyl-aminoacyl)-lactam at alpha-C of the aminoacyl residue followed by spontaneous condensation with the terminal lactam carbonyl group. The polypeptide is D-lysergyl-peptide-synthetase subunit 1 (Claviceps purpurea (Ergot fungus)).